A 356-amino-acid polypeptide reads, in one-letter code: Sporulation minus regulator 1 (356 aa).

A DNA-binding region spans residues 183-199 (HPLRQLPGNPWHKFFGN).

It to N.crassa mta-2.

The protein localises to the nucleus. Transcriptional activator that is required for post-fertilization events. It is required for the developmental events that occur in the female organ after fertilization. The protein is Sporulation minus regulator 1 (SMR1) of Podospora anserina (Pleurage anserina).